Here is a 927-residue protein sequence, read N- to C-terminus: GPI inositol-deacylase (927 aa).

The Cytoplasmic segment spans residues 1–4 (MNPL). Residues 5–25 (SAVFNSVVLVLLALGVTDVFF) form a helical membrane-spanning segment. Topologically, residues 26-595 (SYESSRCSMT…QIVRFHGIYL (570 aa)) are lumenal. N-linked (GlcNAc...) asparagine glycosylation is found at N75 and N155. The active site involves S169. 6 N-linked (GlcNAc...) asparagine glycosylation sites follow: N230, N362, N397, N432, N444, and N482. A helical membrane pass occupies residues 596-616 (PVYIVANLLLAYGAQLHSILI). At 617 to 672 (QGSCMDLDLSFDVAAKPYKVDPVLIICKYLLNYKWFKNYWDGLMLPQLDAVQLHAY) the chain is on the cytoplasmic side. Residues 673–693 (GFWFPLASLFFFIFGTSIAYW) traverse the membrane as a helical segment. Residues 694 to 733 (SSIGLQAAVRILSSLWIYLKRPSMFPKESKCITYRVYAET) are Lumenal-facing. A helical membrane pass occupies residues 734-754 (LFFAFISWRSCGTFSLLLVFL). At 755–821 (RYLSKVLILY…KALDDCLKMH (67 aa)) the chain is on the cytoplasmic side. A helical transmembrane segment spans residues 822 to 842 (FTILHLNLWIVLLGLPSFIYW). Over 843–858 (LKTLRYTIQLDPDPNR) the chain is Lumenal. Residues 859 to 879 (VSALVLIFILEILMNSTTSAI) traverse the membrane as a helical segment. Topologically, residues 880 to 887 (KSSVCLKT) are cytoplasmic. The chain crosses the membrane as a helical span at residues 888–908 (AAVLQLPLSIIVVAFGTLHLY). Over 909-927 (RISNLIAFSLFLHVVCCFV) the chain is Lumenal.

Belongs to the GPI inositol-deacylase family.

Its subcellular location is the endoplasmic reticulum membrane. Its function is as follows. GPI inositol-deacylase that catalyzes the remove of the acyl chain linked to the 2-OH position of inositol ring from the GPI-anchored protein (GPI-AP) in the endoplasmic reticulum. Initiates the post-attachment remodeling phase of GPI-AP biogenesis and participates in endoplasmic reticulum (ER)-to-Golgi transport of GPI-anchored protein. In Xenopus laevis (African clawed frog), this protein is GPI inositol-deacylase.